The sequence spans 121 residues: Basic phospholipase A2 (121 aa).

Disulfide bonds link Cys26/Cys114, Cys28/Cys44, Cys43/Cys94, Cys49/Cys121, Cys50/Cys87, Cys57/Cys80, and Cys74/Cys85. Ca(2+) contacts are provided by Tyr27, Gly29, and Gly31. Residue His47 is part of the active site. Asp48 provides a ligand contact to Ca(2+). The active site involves Asp88.

Homopentamer. Ca(2+) serves as cofactor. In terms of tissue distribution, expressed by the venom gland.

It localises to the secreted. The enzyme catalyses a 1,2-diacyl-sn-glycero-3-phosphocholine + H2O = a 1-acyl-sn-glycero-3-phosphocholine + a fatty acid + H(+). In terms of biological role, snake venom phospholipase A2 (PLA2) that displays moderate myotoxic activity in vivo, and cytotoxic activity in vitro. In vitro, shows anticoagulant activity on human plasma and in mice causes inflammatory cell infiltration and myonecrosis in the gastrocnemius muscles of CD-1 mice 3 hours after injection (100 ug). PLA2 catalyzes the calcium-dependent hydrolysis of the 2-acyl groups in 3-sn-phosphoglycerides. The protein is Basic phospholipase A2 of Porthidium ophryomegas (Slender hognose viper).